The following is a 250-amino-acid chain: Uridylate kinase (250 aa).

Residue 17–20 (KLSG) participates in ATP binding. Glycine 59 provides a ligand contact to UMP. Residues glycine 60 and arginine 64 each coordinate ATP. UMP is bound by residues aspartate 79 and 140–147 (TGNPYFTT). Residues threonine 167, tyrosine 173, and aspartate 176 each coordinate ATP.

Belongs to the UMP kinase family. As to quaternary structure, homohexamer.

The protein resides in the cytoplasm. It carries out the reaction UMP + ATP = UDP + ADP. Its pathway is pyrimidine metabolism; CTP biosynthesis via de novo pathway; UDP from UMP (UMPK route): step 1/1. Inhibited by UTP. Catalyzes the reversible phosphorylation of UMP to UDP. In Myxococcus xanthus (strain DK1622), this protein is Uridylate kinase.